Here is a 690-residue protein sequence, read N- to C-terminus: Glycine--tRNA ligase beta subunit (690 aa).

Belongs to the class-II aminoacyl-tRNA synthetase family. Tetramer of two alpha and two beta subunits.

Its subcellular location is the cytoplasm. The enzyme catalyses tRNA(Gly) + glycine + ATP = glycyl-tRNA(Gly) + AMP + diphosphate. The protein is Glycine--tRNA ligase beta subunit of Proteus mirabilis (strain HI4320).